The chain runs to 483 residues: Dual specificity protein phosphatase CDC14C (483 aa).

Positions 1–45 (MKRKSEGRSSWAAATCSPCCSLTSPSVKKIRSPTQQDPRHRDPQD) are disordered. Residues 1-53 (MKRKSEGRSSWAAATCSPCCSLTSPSVKKIRSPTQQDPRHRDPQDDVYLDITD) carry the Nucleolar localization signal motif. The span at 12–26 (AAATCSPCCSLTSPS) shows a compositional bias: low complexity. Positions 43 to 197 (PQDDVYLDIT…AMQYGFLNFN (155 aa)) are a. Residues 198–211 (SFNLDEYEHYEKAE) are linker. The interval 212-378 (NGDLNWIIPD…EGDYFCQKLK (167 aa)) is b. Residues 213-373 (GDLNWIIPDR…TSLWLEGDYF (161 aa)) form the Tyrosine-protein phosphatase domain. Catalysis depends on Cys313, which acts as the Phosphocysteine intermediate. Positions 407 to 426 (QDQQEPEPYSDDDEINGGTQ) are disordered. Residues 408 to 421 (DQQEPEPYSDDDEI) show a composition bias toward acidic residues. Residues 444 to 466 (ILLTCPLAVLTSALCSVVIWWIV) form a helical membrane-spanning segment.

It belongs to the protein-tyrosine phosphatase family. Non-receptor class CDC14 subfamily.

It is found in the membrane. The protein localises to the nucleus. The protein resides in the nucleolus. Its subcellular location is the cytoplasm. It localises to the cytoskeleton. It carries out the reaction O-phospho-L-tyrosyl-[protein] + H2O = L-tyrosyl-[protein] + phosphate. It catalyses the reaction O-phospho-L-seryl-[protein] + H2O = L-seryl-[protein] + phosphate. The enzyme catalyses O-phospho-L-threonyl-[protein] + H2O = L-threonyl-[protein] + phosphate. Functionally, dual-specificity phosphatase. Preferentially dephosphorylates proteins modified by proline-directed kinases. This Symphalangus syndactylus (Siamang) protein is Dual specificity protein phosphatase CDC14C.